The following is a 136-amino-acid chain: MLSPKRTRFRKQHRGRMKGKSYRGNCICFGRYALQALEPTWITARQIEAGRRAMTRYARRGGKIWVRIFPDKPVTIRPTETRMGSGKGSPEYWVAVVKPGRILYEMGGVSETVARVAISIAASKMPIRSQFLRLEI.

It belongs to the universal ribosomal protein uL16 family. In terms of assembly, part of the 50S ribosomal subunit.

The protein resides in the plastid. It is found in the chloroplast. In Oryza nivara (Indian wild rice), this protein is Large ribosomal subunit protein uL16c.